A 193-amino-acid chain; its full sequence is UPF0314 protein Pden_1914 (193 aa).

A run of 4 helical transmembrane segments spans residues 13–33, 62–82, 148–168, and 172–192; these read APYW…LWIG, WYTP…WLVA, LPVW…TWLI, and LALN…WQAA.

Belongs to the UPF0314 family.

It localises to the cell membrane. This chain is UPF0314 protein Pden_1914, found in Paracoccus denitrificans (strain Pd 1222).